Here is a 170-residue protein sequence, read N- to C-terminus: Probable inosine/xanthosine triphosphatase (170 aa).

Residue glutamate 31 participates in Mg(2+) binding.

It belongs to the YjjX NTPase family. As to quaternary structure, homodimer. Requires Mg(2+) as cofactor. Mn(2+) is required as a cofactor.

It catalyses the reaction XTP + H2O = XDP + phosphate + H(+). It carries out the reaction ITP + H2O = IDP + phosphate + H(+). Its function is as follows. Phosphatase that hydrolyzes non-canonical purine nucleotides such as XTP and ITP to their respective diphosphate derivatives. Probably excludes non-canonical purines from DNA/RNA precursor pool, thus preventing their incorporation into DNA/RNA and avoiding chromosomal lesions. The polypeptide is Probable inosine/xanthosine triphosphatase (Oceanobacillus iheyensis (strain DSM 14371 / CIP 107618 / JCM 11309 / KCTC 3954 / HTE831)).